The primary structure comprises 176 residues: Tubulin polymerization-promoting protein family member 3 (176 aa).

A2 bears the N-acetylalanine mark.

This sequence belongs to the TPPP family.

Its subcellular location is the cytoplasm. It localises to the cytoskeleton. In terms of biological role, regulator of microtubule dynamic that has microtubule bundling activity. Required for embryo implantation; possibly by regulating beta-catenin. Also required for decidualization via regulation of beta-catenin. The chain is Tubulin polymerization-promoting protein family member 3 (TPPP3) from Bos taurus (Bovine).